The chain runs to 78 residues: Musculoskeletal embryonic nuclear protein 1 (78 aa).

Disordered stretches follow at residues methionine 1 to lysine 33 and glutamine 45 to glycine 78. Residues proline 6–valine 14 carry the Nuclear localization signal motif. Over residues valine 64–glycine 78 the composition is skewed to basic and acidic residues.

This sequence belongs to the MUSTN1 family. In terms of tissue distribution, predominantly expressed in heart and skeletal muscle. Detected in skeletal muscle satellite cells where expression increases with cell proliferation.

Its subcellular location is the nucleus. Promotes the differentiation and proliferation of skeletal muscle satellite cells. This chain is Musculoskeletal embryonic nuclear protein 1 (MUSTN1), found in Gallus gallus (Chicken).